Reading from the N-terminus, the 562-residue chain is MSENGSVDEIKVEEFNNEAGQTVESGELSEDNELNRKTGRNLNLIKCEECGLICAGQSHYNVHIRSHTGERPFKCHICGVAFTQKGNLRRHYKIHSDEKPFQCPICSYRCRRRDALNGHMRIHSDMRPYRCSYCARSYKSRQSMKEHEYQCPYKSDPVQPTPPGSEGFPFQNEAVMRNPLALPGPRPSTSQPAPVLSQLGQLGARPPPYPPANINELLALRARLMAPGAQHAPPPPQIRPGLPGFFGNAIPQMPPTTLQQPFNAESHRSAVGMGGTHALALHIRRLLANAVQQNQQPGGLRNSLEKPSLSEATPSSHSSHSSAEDSGQVNKFSPTESKVKPTDINQNVAKILANMVQPHPQLEDVPLPDSRKRPHSFESEPTPKRMRSPNPTNLNLDDSHKEDDVITSESPLEITNERKTFFPHVDAAERTVEAIEDNDEDDVDISVEQLDESKNEISSVDSRSPLDQSSTQDDRMEIKAQISVFKNGAKLNSWECKTCNCIFLNEITYRIHMGVHMHSDPLVCNSCGKRCSDQQEFQAHLVHHQHVSKTVVTAPPKATNVV.

C2H2-type zinc fingers lie at residues 45-67, 73-95, and 101-123; these read IKCEECGLICAGQSHYNVHIRSH, FKCHICGVAFTQKGNLRRHYKIH, and FQCPICSYRCRRRDALNGHMRIH. The C2H2-type 4; degenerate zinc-finger motif lies at 129–152; sequence YRCSYCARSYKSRQSMKEHEYQCP. 4 disordered regions span residues 178-210, 293-342, 361-404, and 451-473; these read NPLALPGPRPSTSQPAPVLSQLGQLGARPPPYP, QNQQ…VKPT, QLED…KEDD, and DESKNEISSVDSRSPLDQSSTQD. The segment covering 307-326 has biased composition (low complexity); that stretch reads PSLSEATPSSHSSHSSAEDS. Residues 327–336 show a composition bias toward polar residues; the sequence is GQVNKFSPTE. Over residues 369–383 the composition is skewed to basic and acidic residues; sequence DSRKRPHSFESEPTP. The segment covering 456-471 has biased composition (polar residues); sequence EISSVDSRSPLDQSST. 2 consecutive C2H2-type zinc fingers follow at residues 494–516 and 522–546; these read WECKTCNCIFLNEITYRIHMGVH and LVCNSCGKRCSDQQEFQAHLVHHQH.

This sequence belongs to the Ikaros C2H2-type zinc-finger protein family. In terms of tissue distribution, expression is strongest in the anterior Fol cells of the oikoplastic epithelium.

The protein resides in the nucleus. In Oikopleura dioica (Tunicate), this protein is Ikaros family zinc finger protein.